The following is a 176-amino-acid chain: NAD(P)H-quinone oxidoreductase subunit 6, chloroplastic (176 aa).

Transmembrane regions (helical) follow at residues 10–30 (FLLV…VLLT), 32–52 (PIFS…FYIL), 61–81 (AQLL…VMFM), 95–115 (VGNG…ITII), and 152–172 (FFLP…GAIA).

It belongs to the complex I subunit 6 family. As to quaternary structure, NDH is composed of at least 16 different subunits, 5 of which are encoded in the nucleus.

It is found in the plastid. The protein resides in the chloroplast thylakoid membrane. It carries out the reaction a plastoquinone + NADH + (n+1) H(+)(in) = a plastoquinol + NAD(+) + n H(+)(out). The catalysed reaction is a plastoquinone + NADPH + (n+1) H(+)(in) = a plastoquinol + NADP(+) + n H(+)(out). Its function is as follows. NDH shuttles electrons from NAD(P)H:plastoquinone, via FMN and iron-sulfur (Fe-S) centers, to quinones in the photosynthetic chain and possibly in a chloroplast respiratory chain. The immediate electron acceptor for the enzyme in this species is believed to be plastoquinone. Couples the redox reaction to proton translocation, and thus conserves the redox energy in a proton gradient. This chain is NAD(P)H-quinone oxidoreductase subunit 6, chloroplastic (ndhG), found in Populus alba (White poplar).